The primary structure comprises 84 residues: Small ribosomal subunit protein uS17 (84 aa).

This sequence belongs to the universal ribosomal protein uS17 family. Part of the 30S ribosomal subunit.

In terms of biological role, one of the primary rRNA binding proteins, it binds specifically to the 5'-end of 16S ribosomal RNA. The chain is Small ribosomal subunit protein uS17 from Klebsiella pneumoniae subsp. pneumoniae (strain ATCC 700721 / MGH 78578).